The following is a 133-amino-acid chain: Small ribosomal subunit protein uS8c (133 aa).

2 disordered regions span residues 1 to 23 (MGND…GAET) and 44 to 133 (FSGN…HVWR). Composition is skewed to polar residues over residues 12–23 (APRNASSRGAET) and 55–66 (TNRFPVSTSKYQ). Basic residues predominate over residues 67-81 (GRTRKARITTRRRVS). Positions 114–133 (TDREARQKRIGGEAPRHVWR) are enriched in basic and acidic residues.

The protein belongs to the universal ribosomal protein uS8 family. As to quaternary structure, part of the 30S ribosomal subunit.

Its subcellular location is the plastid. The protein resides in the chloroplast. Functionally, one of the primary rRNA binding proteins, it binds directly to 16S rRNA central domain where it helps coordinate assembly of the platform of the 30S subunit. This is Small ribosomal subunit protein uS8c (rps8) from Selaginella uncinata (Blue spike-moss).